The primary structure comprises 419 residues: Phospho-N-acetylmuramoyl-pentapeptide-transferase (419 aa).

Helical transmembrane passes span 22–42 (YVSF…TVIG), 72–92 (TPTM…LLLA), 99–119 (ILLM…DDYI), 135–155 (IIGQ…NPAV), 208–228 (VLFG…FISN), 238–258 (GLAT…AYVS), 278–298 (LTIF…YNAY), 303–323 (FMGD…ALII), 328–348 (LLPI…IQVF), and 396–416 (KITV…IATL).

Belongs to the glycosyltransferase 4 family. MraY subfamily. Mg(2+) is required as a cofactor.

The protein resides in the cell inner membrane. The enzyme catalyses UDP-N-acetyl-alpha-D-muramoyl-L-alanyl-gamma-D-glutamyl-meso-2,6-diaminopimeloyl-D-alanyl-D-alanine + di-trans,octa-cis-undecaprenyl phosphate = di-trans,octa-cis-undecaprenyl diphospho-N-acetyl-alpha-D-muramoyl-L-alanyl-D-glutamyl-meso-2,6-diaminopimeloyl-D-alanyl-D-alanine + UMP. It functions in the pathway cell wall biogenesis; peptidoglycan biosynthesis. In terms of biological role, catalyzes the initial step of the lipid cycle reactions in the biosynthesis of the cell wall peptidoglycan: transfers peptidoglycan precursor phospho-MurNAc-pentapeptide from UDP-MurNAc-pentapeptide onto the lipid carrier undecaprenyl phosphate, yielding undecaprenyl-pyrophosphoryl-MurNAc-pentapeptide, known as lipid I. The sequence is that of Phospho-N-acetylmuramoyl-pentapeptide-transferase from Porphyromonas gingivalis (strain ATCC BAA-308 / W83).